Reading from the N-terminus, the 170-residue chain is Cyclic pyranopterin monophosphate synthase (170 aa).

Residues 75-77 and 115-116 contribute to the substrate site; these read MCH and ME. Asp130 is a catalytic residue.

Belongs to the MoaC family. As to quaternary structure, homohexamer; trimer of dimers.

The catalysed reaction is (8S)-3',8-cyclo-7,8-dihydroguanosine 5'-triphosphate = cyclic pyranopterin phosphate + diphosphate. It functions in the pathway cofactor biosynthesis; molybdopterin biosynthesis. Its function is as follows. Catalyzes the conversion of (8S)-3',8-cyclo-7,8-dihydroguanosine 5'-triphosphate to cyclic pyranopterin monophosphate (cPMP). The protein is Cyclic pyranopterin monophosphate synthase of Bacillus subtilis (strain 168).